A 359-amino-acid polypeptide reads, in one-letter code: Heme A synthase (359 aa).

Helical transmembrane passes span 8–28, 94–114, 124–144, 159–179, and 215–235; these read IMSI…VVGG, LLGR…CYLK, LLLI…MVKS, GHLL…LIII, and IIIF…GLDA. His-274 serves as a coordination point for heme. 3 helical membrane passes run 276–296, 303–323, and 328–348; these read WFGI…IILN, MGMV…ITLL, and ILAA…FLFI. His-334 provides a ligand contact to heme.

It belongs to the COX15/CtaA family. Type 2 subfamily. As to quaternary structure, interacts with CtaB. Heme b serves as cofactor.

It is found in the cell membrane. It carries out the reaction Fe(II)-heme o + 2 A + H2O = Fe(II)-heme a + 2 AH2. The protein operates within porphyrin-containing compound metabolism; heme A biosynthesis; heme A from heme O: step 1/1. Functionally, catalyzes the conversion of heme O to heme A by two successive hydroxylations of the methyl group at C8. The first hydroxylation forms heme I, the second hydroxylation results in an unstable dihydroxymethyl group, which spontaneously dehydrates, resulting in the formyl group of heme A. In Orientia tsutsugamushi (strain Boryong) (Rickettsia tsutsugamushi), this protein is Heme A synthase.